A 603-amino-acid polypeptide reads, in one-letter code: Elongation factor 4 (603 aa).

In terms of domain architecture, tr-type G spans 7 to 189 (SRIRNFSIIA…SIVQLVPPPQ (183 aa)). GTP-binding positions include 19–24 (DHGKST) and 136–139 (NKID).

Belongs to the TRAFAC class translation factor GTPase superfamily. Classic translation factor GTPase family. LepA subfamily.

Its subcellular location is the cell inner membrane. The enzyme catalyses GTP + H2O = GDP + phosphate + H(+). Required for accurate and efficient protein synthesis under certain stress conditions. May act as a fidelity factor of the translation reaction, by catalyzing a one-codon backward translocation of tRNAs on improperly translocated ribosomes. Back-translocation proceeds from a post-translocation (POST) complex to a pre-translocation (PRE) complex, thus giving elongation factor G a second chance to translocate the tRNAs correctly. Binds to ribosomes in a GTP-dependent manner. This chain is Elongation factor 4, found in Microcystis aeruginosa (strain NIES-843 / IAM M-2473).